Reading from the N-terminus, the 215-residue chain is UPF0173 metal-dependent hydrolase NEQ378 (215 aa).

The protein belongs to the UPF0173 family.

This Nanoarchaeum equitans (strain Kin4-M) protein is UPF0173 metal-dependent hydrolase NEQ378.